We begin with the raw amino-acid sequence, 206 residues long: Thymidylate kinase (206 aa).

7-14 (GGEGVGKT) is an ATP binding site.

The protein belongs to the thymidylate kinase family.

It catalyses the reaction dTMP + ATP = dTDP + ADP. Functionally, phosphorylation of dTMP to form dTDP in both de novo and salvage pathways of dTTP synthesis. In Synechococcus sp. (strain JA-2-3B'a(2-13)) (Cyanobacteria bacterium Yellowstone B-Prime), this protein is Thymidylate kinase.